Consider the following 648-residue polypeptide: Spastin (648 aa).

The Cytoplasmic segment spans residues 1 to 40 (MASTVALLRDSSDDRENFDDGETDCVQVGRKRKLTVFFYP). An intramembrane region (helical) is located at residues 41–61 (LLLVFWLLRWVFYQFFLVLCF). Residues 62 to 648 (VCRGFVPRRH…WNREFGDITV (587 aa)) are Cytoplasmic-facing. One can recognise an MIT domain in the interval 99–174 (HKKAFDFISK…EMARDRLDFL (76 aa)). Residues 188-346 (PWHGGVAPAQ…SQRSLLSSRV (159 aa)) form a disordered region. The segment covering 247–266 (TGVTLRRQQQQQLGGVSTVS) has biased composition (low complexity). 414–421 (GPPGNGKT) contacts ATP.

This sequence belongs to the AAA ATPase family. Spastin subfamily. As to quaternary structure, homohexamer. The homohexamer is stabilized by ATP-binding. The homohexamer may adopt a ring conformation through which microtubules pass prior to being severed. Interacts with microtubules.

It localises to the membrane. The protein localises to the cytoplasm. Its subcellular location is the cytoskeleton. It is found in the microtubule organizing center. The protein resides in the centrosome. The enzyme catalyses n ATP + n H2O + a microtubule = n ADP + n phosphate + (n+1) alpha/beta tubulin heterodimers.. Its function is as follows. ATP-dependent microtubule severing protein. Microtubule severing may promote reorganization of cellular microtubule arrays and the release of microtubules from the microtubule organizing center following nucleation. This is Spastin (spas) from Ixodes scapularis (Black-legged tick).